The sequence spans 1028 residues: Formate dehydrogenase major subunit (1028 aa).

The tat-type signal signal peptide spans 1–33; that stretch reads MQVSRRKFFKICAGGMAGTSAAMLGFAPANVLA. In terms of domain architecture, 4Fe-4S Mo/W bis-MGD-type spans 43-114; it reads AFESRNTCTY…GSLDYVNSES (72 aa). Cys-50, Cys-53, Cys-57, and Cys-100 together coordinate [4Fe-4S] cluster. A non-standard amino acid (selenocysteine) is located at residue Sec-204.

It belongs to the prokaryotic molybdopterin-containing oxidoreductase family. Formate dehydrogenase is a membrane-bound complex, formed by subunits alpha, beta and gamma. Requires Mo-bis(molybdopterin guanine dinucleotide) as cofactor. It depends on [4Fe-4S] cluster as a cofactor. Post-translationally, predicted to be exported by the Tat system. The position of the signal peptide cleavage has not been experimentally proven.

The protein localises to the periplasm. The catalysed reaction is formate + NAD(+) = CO2 + NADH. In terms of biological role, allows to use formate as major electron donor during anaerobic respiration. Subunit alpha possibly forms the active site. In Haemophilus influenzae (strain ATCC 51907 / DSM 11121 / KW20 / Rd), this protein is Formate dehydrogenase major subunit (fdxG).